Here is a 391-residue protein sequence, read N- to C-terminus: MASIEEIRQAQRADGPATILAIGTATPPNAIYQADYPDYYFRVTKSEHMTELKEKFRRMCDKSMIKKRYMYLTEEILKENPNLCEYMGSSLDTRQDMVVSEVPRLGKEAAVKAIKEWGQPKSKITHVIMCTTSGVDMPGADYQLTKLLGLRPSVRRFMLYQQGCFAGGTVLRLAKDLAENNKGARVLVVCSEITAICFRGPTEAALDSMVGQALFGDGAGALIVGSDPDLSIERPLFQMAWAGQTLLPDSEGAIDGHLREVGLTFHLLKDVPGIISKNITNALEEAFSPIGVSDWNNLFWIAHPGGPAILDQVEAKLGLKEEKLAATRNVLSDFGNMSSACVLFILDEMRKKSLRDGATTTGEGLDWGVLFGFGPGLTVETVVLHSVPLNC.

Cys164 is an active-site residue.

This sequence belongs to the thiolase-like superfamily. Chalcone/stilbene synthases family.

It carries out the reaction (E)-4-coumaroyl-CoA + 3 malonyl-CoA + 3 H(+) = 2',4,4',6'-tetrahydroxychalcone + 3 CO2 + 4 CoA. It functions in the pathway secondary metabolite biosynthesis; flavonoid biosynthesis. Its function is as follows. The primary product of this enzyme is 4,2',4',6'-tetrahydroxychalcone (also termed naringenin-chalcone or chalcone) which can under specific conditions spontaneously isomerize into naringenin. The polypeptide is Chalcone synthase (CHS) (Dianthus monspessulanus).